Consider the following 229-residue polypeptide: Enolase-phosphatase E1 (229 aa).

It belongs to the HAD-like hydrolase superfamily. MasA/MtnC family. As to quaternary structure, monomer. The cofactor is Mg(2+).

The enzyme catalyses 5-methylsulfanyl-2,3-dioxopentyl phosphate + H2O = 1,2-dihydroxy-5-(methylsulfanyl)pent-1-en-3-one + phosphate. Its pathway is amino-acid biosynthesis; L-methionine biosynthesis via salvage pathway; L-methionine from S-methyl-5-thio-alpha-D-ribose 1-phosphate: step 3/6. The protein operates within amino-acid biosynthesis; L-methionine biosynthesis via salvage pathway; L-methionine from S-methyl-5-thio-alpha-D-ribose 1-phosphate: step 4/6. In terms of biological role, bifunctional enzyme that catalyzes the enolization of 2,3-diketo-5-methylthiopentyl-1-phosphate (DK-MTP-1-P) into the intermediate 2-hydroxy-3-keto-5-methylthiopentenyl-1-phosphate (HK-MTPenyl-1-P), which is then dephosphorylated to form the acireductone 1,2-dihydroxy-3-keto-5-methylthiopentene (DHK-MTPene). This chain is Enolase-phosphatase E1, found in Yersinia pseudotuberculosis serotype IB (strain PB1/+).